The sequence spans 580 residues: Laccase-5 (580 aa).

Residues 1–25 form the signal peptide; the sequence is MDVTKSLLCFISFVAFLLFSSVAEA. 2 Plastocyanin-like domains span residues 34–150 and 160–312; these read IIQA…PPAG and RNVP…YKSA. Asparagine 80 carries an N-linked (GlcNAc...) asparagine glycan. Cu cation contacts are provided by histidine 84, histidine 86, histidine 129, and histidine 131. N-linked (GlcNAc...) asparagine glycans are attached at residues asparagine 189, asparagine 300, asparagine 340, asparagine 392, asparagine 402, asparagine 410, and asparagine 443. The Plastocyanin-like 3 domain maps to 428–564; sequence DFPAKPPVKF…AMAFLVENGN (137 aa). 7 residues coordinate Cu cation: histidine 481, histidine 484, histidine 486, histidine 543, cysteine 544, histidine 545, and histidine 549.

Belongs to the multicopper oxidase family. It depends on Cu cation as a cofactor. Ubiquitous and constitutive.

The protein resides in the secreted. It localises to the extracellular space. It is found in the apoplast. It carries out the reaction 4 hydroquinone + O2 = 4 benzosemiquinone + 2 H2O. Lignin degradation and detoxification of lignin-derived products. This chain is Laccase-5 (LAC5), found in Arabidopsis thaliana (Mouse-ear cress).